The chain runs to 170 residues: AP-5 complex subunit sigma-1 (170 aa).

Probably part of the adaptor protein complex 5 (AP-5) a tetramer composed of AP5B1, AP5M1, AP5S1 and AP5Z1. Interacts with ZFYVE26 and SPG11.

Its subcellular location is the cytoplasm. The protein localises to the cytosol. The protein resides in the late endosome membrane. It localises to the lysosome membrane. Its function is as follows. As part of AP-5, a probable fifth adaptor protein complex it may be involved in endosomal transport. This is AP-5 complex subunit sigma-1 (Ap5s1) from Mus musculus (Mouse).